A 307-amino-acid polypeptide reads, in one-letter code: Acetyl-coenzyme A carboxylase carboxyl transferase subunit beta (307 aa).

The segment at 1–21 (MAMADQRNDKPGRPAAQRERR) is disordered. The region spanning 43–307 (LWVKCPETGE…MGRERLSPAA (265 aa)) is the CoA carboxyltransferase N-terminal domain.

Belongs to the AccD/PCCB family. In terms of assembly, acetyl-CoA carboxylase is a heterohexamer composed of biotin carboxyl carrier protein (AccB), biotin carboxylase (AccC) and two subunits each of ACCase subunit alpha (AccA) and ACCase subunit beta (AccD).

The protein localises to the cytoplasm. It catalyses the reaction N(6)-carboxybiotinyl-L-lysyl-[protein] + acetyl-CoA = N(6)-biotinyl-L-lysyl-[protein] + malonyl-CoA. It participates in lipid metabolism; malonyl-CoA biosynthesis; malonyl-CoA from acetyl-CoA: step 1/1. Functionally, component of the acetyl coenzyme A carboxylase (ACC) complex. Biotin carboxylase (BC) catalyzes the carboxylation of biotin on its carrier protein (BCCP) and then the CO(2) group is transferred by the transcarboxylase to acetyl-CoA to form malonyl-CoA. This Phenylobacterium zucineum (strain HLK1) protein is Acetyl-coenzyme A carboxylase carboxyl transferase subunit beta.